The sequence spans 604 residues: UvrABC system protein C (604 aa).

The GIY-YIG domain occupies 10-89 (ELPGVYLMKD…VKKNRPHYNI (80 aa)). Residues 199 to 234 (SGTIKELQEKMNIHAIAQEYESAAVIRDQIDALKSL) enclose the UVR domain.

Belongs to the UvrC family. As to quaternary structure, interacts with UvrB in an incision complex.

Its subcellular location is the cytoplasm. Functionally, the UvrABC repair system catalyzes the recognition and processing of DNA lesions. UvrC both incises the 5' and 3' sides of the lesion. The N-terminal half is responsible for the 3' incision and the C-terminal half is responsible for the 5' incision. The protein is UvrABC system protein C of Methanococcoides burtonii (strain DSM 6242 / NBRC 107633 / OCM 468 / ACE-M).